The chain runs to 92 residues: Small ribosomal subunit protein uS19 (92 aa).

This sequence belongs to the universal ribosomal protein uS19 family.

Its function is as follows. Protein S19 forms a complex with S13 that binds strongly to the 16S ribosomal RNA. The polypeptide is Small ribosomal subunit protein uS19 (Rhizobium etli (strain CIAT 652)).